The primary structure comprises 276 residues: Dermonecrotic toxin LlSicTox-alphaIV2i (276 aa).

Residue His-5 is part of the active site. Positions 25 and 27 each coordinate Mg(2+). The active-site Nucleophile is His-41. Disulfide bonds link Cys-45/Cys-51 and Cys-47/Cys-193. Asp-85 is a Mg(2+) binding site.

This sequence belongs to the arthropod phospholipase D family. Class II subfamily. Requires Mg(2+) as cofactor. In terms of tissue distribution, expressed by the venom gland.

It localises to the secreted. It catalyses the reaction an N-(acyl)-sphingosylphosphocholine = an N-(acyl)-sphingosyl-1,3-cyclic phosphate + choline. The catalysed reaction is an N-(acyl)-sphingosylphosphoethanolamine = an N-(acyl)-sphingosyl-1,3-cyclic phosphate + ethanolamine. It carries out the reaction a 1-acyl-sn-glycero-3-phosphocholine = a 1-acyl-sn-glycero-2,3-cyclic phosphate + choline. The enzyme catalyses a 1-acyl-sn-glycero-3-phosphoethanolamine = a 1-acyl-sn-glycero-2,3-cyclic phosphate + ethanolamine. In terms of biological role, dermonecrotic toxins cleave the phosphodiester linkage between the phosphate and headgroup of certain phospholipids (sphingolipid and lysolipid substrates), forming an alcohol (often choline) and a cyclic phosphate. This toxin acts on sphingomyelin (SM). It may also act on ceramide phosphoethanolamine (CPE), lysophosphatidylcholine (LPC) and lysophosphatidylethanolamine (LPE), but not on lysophosphatidylserine (LPS), and lysophosphatidylglycerol (LPG). It acts by transphosphatidylation, releasing exclusively cyclic phosphate products as second products. Induces dermonecrosis, hemolysis, increased vascular permeability, edema, inflammatory response, and platelet aggregation. The chain is Dermonecrotic toxin LlSicTox-alphaIV2i from Loxosceles laeta (South American recluse spider).